The sequence spans 443 residues: Trigger factor (443 aa).

A PPIase FKBP-type domain is found at 165 to 250 (GDQIVMDFLG…VKEVKKPVPA (86 aa)).

The protein belongs to the FKBP-type PPIase family. Tig subfamily.

It is found in the cytoplasm. The enzyme catalyses [protein]-peptidylproline (omega=180) = [protein]-peptidylproline (omega=0). Involved in protein export. Acts as a chaperone by maintaining the newly synthesized protein in an open conformation. Functions as a peptidyl-prolyl cis-trans isomerase. This Roseobacter denitrificans (strain ATCC 33942 / OCh 114) (Erythrobacter sp. (strain OCh 114)) protein is Trigger factor.